Here is a 210-residue protein sequence, read N- to C-terminus: uncharacterized protein (210 aa).

The N-terminal stretch at 1–21 (MLKMNVKKALVILVALALVAA) is a signal peptide.

This is an uncharacterized protein from Archaeoglobus fulgidus (strain ATCC 49558 / DSM 4304 / JCM 9628 / NBRC 100126 / VC-16).